The following is a 176-amino-acid chain: Cytochrome b (176 aa).

A run of 3 helical transmembrane segments spans residues 33–53 (FGSLLGLCLLIQILTGLFLAM), 77–98 (WLIRYMHANGASLFFICLFLHV), and 113–133 (WNIGVILLFAVMATAFMGYVL). Positions 83 and 97 each coordinate heme b.

This sequence belongs to the cytochrome b family. In terms of assembly, the cytochrome bc1 complex contains 11 subunits: 3 respiratory subunits (MT-CYB, CYC1 and UQCRFS1), 2 core proteins (UQCRC1 and UQCRC2) and 6 low-molecular weight proteins (UQCRH/QCR6, UQCRB/QCR7, UQCRQ/QCR8, UQCR10/QCR9, UQCR11/QCR10 and a cleavage product of UQCRFS1). This cytochrome bc1 complex then forms a dimer. The cofactor is heme b.

The protein localises to the mitochondrion inner membrane. Its function is as follows. Component of the ubiquinol-cytochrome c reductase complex (complex III or cytochrome b-c1 complex) that is part of the mitochondrial respiratory chain. The b-c1 complex mediates electron transfer from ubiquinol to cytochrome c. Contributes to the generation of a proton gradient across the mitochondrial membrane that is then used for ATP synthesis. The sequence is that of Cytochrome b (MT-CYB) from Sciurus carolinensis (Eastern gray squirrel).